A 684-amino-acid polypeptide reads, in one-letter code: Threonine--tRNA ligase (684 aa).

The region spanning 1-60 is the TGS domain; the sequence is MSISITLHRSGTSRTQQVDTTTTGLDLFGSDRAVVAMRVDGNLVDLQRELHDGAEVEPVE. Residues 256–567 are catalytic; the sequence is DHRKLGAELD…LTEHYAGAFP (312 aa). Zn(2+) is bound by residues C361, H412, and H544.

The protein belongs to the class-II aminoacyl-tRNA synthetase family. In terms of assembly, homodimer. Zn(2+) is required as a cofactor.

The protein localises to the cytoplasm. It carries out the reaction tRNA(Thr) + L-threonine + ATP = L-threonyl-tRNA(Thr) + AMP + diphosphate + H(+). Functionally, catalyzes the attachment of threonine to tRNA(Thr) in a two-step reaction: L-threonine is first activated by ATP to form Thr-AMP and then transferred to the acceptor end of tRNA(Thr). Also edits incorrectly charged L-seryl-tRNA(Thr). The chain is Threonine--tRNA ligase from Cutibacterium acnes (strain DSM 16379 / KPA171202) (Propionibacterium acnes).